The sequence spans 312 residues: tRNA dimethylallyltransferase (312 aa).

15-22 serves as a coordination point for ATP; the sequence is GPTAAGKS. 17-22 is a binding site for substrate; it reads TAAGKS. The segment at 40–43 is interaction with substrate tRNA; that stretch reads DSMQ.

The protein belongs to the IPP transferase family. In terms of assembly, monomer. It depends on Mg(2+) as a cofactor.

The catalysed reaction is adenosine(37) in tRNA + dimethylallyl diphosphate = N(6)-dimethylallyladenosine(37) in tRNA + diphosphate. Its function is as follows. Catalyzes the transfer of a dimethylallyl group onto the adenine at position 37 in tRNAs that read codons beginning with uridine, leading to the formation of N6-(dimethylallyl)adenosine (i(6)A). The sequence is that of tRNA dimethylallyltransferase from Streptomyces avermitilis (strain ATCC 31267 / DSM 46492 / JCM 5070 / NBRC 14893 / NCIMB 12804 / NRRL 8165 / MA-4680).